Reading from the N-terminus, the 366-residue chain is Methylthioribose-1-phosphate isomerase (366 aa).

Asp-260 acts as the Proton donor in catalysis.

Belongs to the eIF-2B alpha/beta/delta subunits family. MtnA subfamily.

Its subcellular location is the cytoplasm. The protein localises to the nucleus. The catalysed reaction is 5-(methylsulfanyl)-alpha-D-ribose 1-phosphate = 5-(methylsulfanyl)-D-ribulose 1-phosphate. Its pathway is amino-acid biosynthesis; L-methionine biosynthesis via salvage pathway; L-methionine from S-methyl-5-thio-alpha-D-ribose 1-phosphate: step 1/6. Catalyzes the interconversion of methylthioribose-1-phosphate (MTR-1-P) into methylthioribulose-1-phosphate (MTRu-1-P). The sequence is that of Methylthioribose-1-phosphate isomerase from Caenorhabditis briggsae.